The following is a 135-amino-acid chain: Transcriptional regulator HosA (135 aa).

The HTH marR-type domain occupies 4–134 (RNKAFHQLRQ…FVQLVRKMMN (131 aa)). A DNA-binding region (H-T-H motif) is located at residues 48–71 (QVALIEAAVSTKATLAEMLARMEN).

In terms of biological role, involved in the temperature-dependent positive control of flagellum-driven swimming motility and cellular aggregation. Regulates fliC expression by directly interacting with fliC promoter. This chain is Transcriptional regulator HosA (hosA), found in Escherichia coli O157:H7.